Reading from the N-terminus, the 137-residue chain is Small ribosomal subunit protein uS9 (137 aa).

Belongs to the universal ribosomal protein uS9 family.

The protein is Small ribosomal subunit protein uS9 (rps9) of Saccharolobus solfataricus (strain ATCC 35092 / DSM 1617 / JCM 11322 / P2) (Sulfolobus solfataricus).